The following is a 231-amino-acid chain: Urease accessory protein UreF (231 aa).

It belongs to the UreF family. UreD, UreF and UreG form a complex that acts as a GTP-hydrolysis-dependent molecular chaperone, activating the urease apoprotein by helping to assemble the nickel containing metallocenter of UreC. The UreE protein probably delivers the nickel.

It is found in the cytoplasm. Functionally, required for maturation of urease via the functional incorporation of the urease nickel metallocenter. The chain is Urease accessory protein UreF from Magnetococcus marinus (strain ATCC BAA-1437 / JCM 17883 / MC-1).